Reading from the N-terminus, the 87-residue chain is Phosphoribosyl-ATP pyrophosphatase (87 aa).

Belongs to the PRA-PH family.

The protein resides in the cytoplasm. The enzyme catalyses 1-(5-phospho-beta-D-ribosyl)-ATP + H2O = 1-(5-phospho-beta-D-ribosyl)-5'-AMP + diphosphate + H(+). It participates in amino-acid biosynthesis; L-histidine biosynthesis; L-histidine from 5-phospho-alpha-D-ribose 1-diphosphate: step 2/9. In Pseudarthrobacter chlorophenolicus (strain ATCC 700700 / DSM 12829 / CIP 107037 / JCM 12360 / KCTC 9906 / NCIMB 13794 / A6) (Arthrobacter chlorophenolicus), this protein is Phosphoribosyl-ATP pyrophosphatase.